Here is a 187-residue protein sequence, read N- to C-terminus: Cytochrome b-245 chaperone 1 (187 aa).

Residues 20–42 (GIRSWSLLVGILSIGLAAAYYSG) form a helical membrane-spanning segment. At S168 the chain carries Phosphoserine.

It belongs to the CYBC1 family. In terms of assembly, interacts with CYBB; CYBC1 may act as a chaperone stabilizing Cytochrome b-245 heterodimer.

Its subcellular location is the endoplasmic reticulum membrane. Functionally, functions as a chaperone necessary for a stable expression of the CYBA and CYBB subunits of the cytochrome b-245 heterodimer. Controls the phagocyte respiratory burst and is essential for innate immunity. The polypeptide is Cytochrome b-245 chaperone 1 (Bos taurus (Bovine)).